We begin with the raw amino-acid sequence, 1033 residues long: Isoleucine--tRNA ligase 2 (1033 aa).

A 'HIGH' region motif is present at residues 47–57; sequence PTANGLPHVGH. A 'KMSKS' region motif is present at residues 590–594; the sequence is KMSKS. Residue Lys593 coordinates ATP.

It belongs to the class-I aminoacyl-tRNA synthetase family. IleS type 2 subfamily. As to quaternary structure, monomer. Zn(2+) is required as a cofactor.

It is found in the cytoplasm. The catalysed reaction is tRNA(Ile) + L-isoleucine + ATP = L-isoleucyl-tRNA(Ile) + AMP + diphosphate. Catalyzes the attachment of isoleucine to tRNA(Ile). As IleRS can inadvertently accommodate and process structurally similar amino acids such as valine, to avoid such errors it has two additional distinct tRNA(Ile)-dependent editing activities. One activity is designated as 'pretransfer' editing and involves the hydrolysis of activated Val-AMP. The other activity is designated 'posttransfer' editing and involves deacylation of mischarged Val-tRNA(Ile). The sequence is that of Isoleucine--tRNA ligase 2 from Bacillus cereus (strain ZK / E33L).